Consider the following 335-residue polypeptide: 2-acylglycerol O-acyltransferase 2 (335 aa).

A run of 2 helical transmembrane segments spans residues 24 to 44 (WAVS…LLLF) and 104 to 124 (YIMG…NFCT). An N-linked (GlcNAc...) asparagine glycan is attached at N206.

This sequence belongs to the diacylglycerol acyltransferase family.

It is found in the endoplasmic reticulum membrane. The protein localises to the cytoplasm. Its subcellular location is the perinuclear region. The catalysed reaction is a 2-acylglycerol + an acyl-CoA = a 1,2-diacylglycerol + CoA. It catalyses the reaction a 2-acylglycerol + an acyl-CoA = a 1,2-diacyl-sn-glycerol + CoA. The enzyme catalyses a 2-acylglycerol + an acyl-CoA = a 2,3-diacyl-sn-glycerol + CoA. It carries out the reaction a 1-acylglycerol + an acyl-CoA = a 1,2-diacylglycerol + CoA. The catalysed reaction is a 1-acylglycerol + an acyl-CoA = a 1,3-diacylglycerol + CoA. It catalyses the reaction 1-O-alkylglycerol + an acyl-CoA = 1-O-alkyl-3-acylglycerol + CoA. The enzyme catalyses an acyl-CoA + a 1,2-diacyl-sn-glycerol = a triacyl-sn-glycerol + CoA. It functions in the pathway glycerolipid metabolism; triacylglycerol biosynthesis. In terms of biological role, involved in glycerolipid synthesis and lipid metabolism. Catalyzes the formation of diacylglycerol, the precursor of triacylglycerol, by transferring the acyl chain of a fatty acyl-CoA to a monoacylglycerol. Plays a central role in absorption of dietary fat in the small intestine by catalyzing the resynthesis of triacylglycerol in enterocytes. Has a preference toward monoacylglycerols containing unsaturated fatty acids in an order of C18:3 &gt; C18:2 &gt; C18:1 &gt; C18:0 at sn-2. Able to use 1-monoalkylglycerol (1-MAkG, 1-O-alkylglycerol) as an acyl acceptor for the synthesis of monoalkyl-monoacylglycerol (MAMAG, 1-O-alkyl-3-acylglycerol or 1-O-alkyl-2-acylglycerol) and subsequently, with lower efficiency, may add another acyl chain producing monoalkyl-diacylglycerol (MADAG, 1-O-alkyl-2,3-diacylglycerol). Possesses weak but significant activity with diacylglycerol as substrate, producing triacylglycerol (triacyl-sn-glycerol). This chain is 2-acylglycerol O-acyltransferase 2 (mogat2), found in Xenopus tropicalis (Western clawed frog).